Here is a 180-residue protein sequence, read N- to C-terminus: MKGGKRVQPARPNRINREIRANEVRLTGVEGEQLGIVSLNEALEKAEEAGVDLVEISPNAEPPVCRIMDYGKFLYEKSKATKEQKKKQKVIQVKEIKFRPGTDDGDYQVKLRNLIRFLEDGDKAKITLRFRGREMAHQQIGIEVLNRVRDDLSELAVVESFPSKIEGRQMIMVLAPKKKQ.

The protein belongs to the IF-3 family. In terms of assembly, monomer.

Its subcellular location is the cytoplasm. Its function is as follows. IF-3 binds to the 30S ribosomal subunit and shifts the equilibrium between 70S ribosomes and their 50S and 30S subunits in favor of the free subunits, thus enhancing the availability of 30S subunits on which protein synthesis initiation begins. The chain is Translation initiation factor IF-3 from Pectobacterium atrosepticum (strain SCRI 1043 / ATCC BAA-672) (Erwinia carotovora subsp. atroseptica).